Reading from the N-terminus, the 837-residue chain is GRIP1-associated protein 1 (837 aa).

An N-acetylalanine modification is found at alanine 2. Positions 4-158 form a coiled coil; sequence ALSEEEFQRM…ALQERYGKEA (155 aa). 4 disordered regions span residues 161–180, 555–577, 647–666, and 677–702; these read PSAV…PISL, KGKE…ERDG, SEMN…VSSF, and SSAI…LSDE. Residues 204 to 637 are a coiled coil; it reads EQLQGLESSK…LQEILTNSKS (434 aa). Positions 648 to 666 are enriched in polar residues; that stretch reads EMNSPSRTQTGDSSSVSSF. Residues serine 651, serine 662, serine 664, serine 665, serine 684, serine 686, serine 687, and serine 688 each carry the phosphoserine modification. Residues 678 to 690 show a composition bias toward low complexity; it reads SAIPARSLSSSPQ. Coiled-coil stretches lie at residues 697–731 and 781–810; these read AELS…LEVS and DENL…KDME. Serine 826 is modified (phosphoserine).

Interacts with GRIP1, GRIP2 and AMPA receptors. Interacts (via C-terminus) with MAPK8/JNK1 and with MAP3K1/MEKK1; the interaction promotes MAP3K1-mediated phosphorylation of MAPK8. Interacts (via N-terminus) with RAB4A (in GTP-bound form). Interacts (via C-terminus) with STX12. In terms of processing, proteolytically cleaved by caspase-3. A minor C-terminal proteolytic fragment of 30 kDa is produced. Proteolytic cleavage is required for JNK signaling activation. As to expression, expressed in the central nervous system; especially in neurons.

The protein resides in the early endosome membrane. The protein localises to the recycling endosome membrane. It is found in the cell projection. Its subcellular location is the axon. It localises to the dendrite. The protein resides in the synapse. Its function is as follows. Regulates the endosomal recycling back to the neuronal plasma membrane, possibly by connecting early and late recycling endosomal domains and promoting segregation of recycling endosomes from early endosomal membranes. Involved in the localization of recycling endosomes to dendritic spines, thereby playing a role in the maintenance of dendritic spine morphology. Required for the activity-induced AMPA receptor recycling to dendrite membranes and for long-term potentiation and synaptic plasticity. Functions as a scaffold protein in neurons to facilitate MAP3K1/MEKK1-mediated activation of the JNK1 kinase by phosphorylation, possibly by bringing MAP3K1/MEKK1 and JNK1 in close proximity. The chain is GRIP1-associated protein 1 (Gripap1) from Rattus norvegicus (Rat).